Reading from the N-terminus, the 344-residue chain is C-C chemokine receptor-like 2 (344 aa).

Over 1 to 43 the chain is Extracellular; sequence MANYTLAPEDEYDVLIEGELESDEAEQCDKYDAQALSAQLVPS. Residue asparagine 3 is glycosylated (N-linked (GlcNAc...) asparagine). The chain crosses the membrane as a helical span at residues 44 to 64; the sequence is LCSAVFVIGVLDNLLVVLILV. Residues 65–74 are Cytoplasmic-facing; that stretch reads KYKGLKRVEN. A helical transmembrane segment spans residues 75–95; it reads IYLLNLAVSNLCFLLTLPFWA. The Extracellular segment spans residues 96 to 104; the sequence is HAGGDPMCK. The cysteines at positions 103 and 181 are disulfide-linked. Residues 105–125 traverse the membrane as a helical segment; it reads ILIGLYFVGLYSETFFNCLLT. The Cytoplasmic portion of the chain corresponds to 126–144; it reads VQRYLVFLHKGNFFSARRR. The chain crosses the membrane as a helical span at residues 145 to 165; it reads VPCGIITSVLAWVTAILATLP. Over 166–198 the chain is Extracellular; sequence EFVVYKPQMEDQKYKCAFSRTPFLPADETFWKH. A helical membrane pass occupies residues 199 to 219; that stretch reads FLTLKMNISVLVLPLFIFTFL. Residues 220 to 238 are Cytoplasmic-facing; that stretch reads YVQMRKTLRFREQRYSLFK. Residues 239 to 259 traverse the membrane as a helical segment; sequence LVFAIMVVFLLMWAPYNIAFF. At 260–286 the chain is on the extracellular side; it reads LSTFKEHFSLSDCKSSYNLDKSVHITK. The chain crosses the membrane as a helical span at residues 287–307; the sequence is LIATTHCCINPLLYAFLDGTF. The Cytoplasmic segment spans residues 308–344; sequence SKYLCRCFHLRSNTPLQPRGQSAQGTSREEPDHSTEV. Residues 324 to 333 show a composition bias toward polar residues; sequence QPRGQSAQGT. Residues 324–344 form a disordered region; sequence QPRGQSAQGTSREEPDHSTEV. The span at 334–344 shows a compositional bias: basic and acidic residues; sequence SREEPDHSTEV.

Belongs to the G-protein coupled receptor 1 family. Expressed abundantly in immunal tissues such as spleen, fetal liver, lymph node and bone marrow. Strong expression also in lung and heart. Expressed in almost all hematopoietic cells including monocytes, macrophages, PMNs, T-cells (both CD4+ and CD8+), monocyte-derived iDCs, NK cells, and CD34+ progenitor cells. B-cells expressed isoform 1 but not isoform 2. Up-regulated on synovial neutrophils of rheumatoid arthritis patients.

The protein localises to the cell membrane. Receptor for CCL19 and chemerin/RARRES2. Does not appear to be a signaling receptor, but may have a role in modulating chemokine-triggered immune responses by capturing and internalizing CCL19 or by presenting RARRES2 ligand to CMKLR1, a functional signaling receptors. Plays a critical role for the development of Th2 responses. This Homo sapiens (Human) protein is C-C chemokine receptor-like 2 (CCRL2).